Reading from the N-terminus, the 64-residue chain is U-scoloptoxin(14)-Er1a (64 aa).

The N-terminal stretch at 1–23 is a signal peptide; that stretch reads MRPSFPLLLIMLLVCTAHHMVSG.

The protein belongs to the scoloptoxin-14 family. Contains 4 disulfide bonds. As to expression, expressed by the venom gland.

It localises to the secreted. The polypeptide is U-scoloptoxin(14)-Er1a (Ethmostigmus rubripes (Giant centipede)).